Reading from the N-terminus, the 732-residue chain is 1,4-alpha-glucan branching enzyme GlgB (732 aa).

D409 serves as the catalytic Nucleophile. The Proton donor role is filled by E462.

This sequence belongs to the glycosyl hydrolase 13 family. GlgB subfamily. Monomer.

The enzyme catalyses Transfers a segment of a (1-&gt;4)-alpha-D-glucan chain to a primary hydroxy group in a similar glucan chain.. The protein operates within glycan biosynthesis; glycogen biosynthesis. In terms of biological role, catalyzes the formation of the alpha-1,6-glucosidic linkages in glycogen by scission of a 1,4-alpha-linked oligosaccharide from growing alpha-1,4-glucan chains and the subsequent attachment of the oligosaccharide to the alpha-1,6 position. The protein is 1,4-alpha-glucan branching enzyme GlgB of Corynebacterium diphtheriae (strain ATCC 700971 / NCTC 13129 / Biotype gravis).